A 218-amino-acid chain; its full sequence is Eukaryotic translation initiation factor 3 subunit K (218 aa).

Residues 42–204 (YDLEANLAVL…NIKPKNIVEK (163 aa)) enclose the PCI domain.

Belongs to the eIF-3 subunit K family. As to quaternary structure, component of the eukaryotic translation initiation factor 3 (eIF-3) complex, which is composed of 13 subunits: eif3a, eif3b, eif3c, eif3d, eif3e, eif3f, eif3g, eif3h, eif3i, eif3j, eif3k, eif3l and eif3m.

It localises to the nucleus. The protein resides in the cytoplasm. Functionally, component of the eukaryotic translation initiation factor 3 (eIF-3) complex, which is involved in protein synthesis of a specialized repertoire of mRNAs and, together with other initiation factors, stimulates binding of mRNA and methionyl-tRNAi to the 40S ribosome. The eIF-3 complex specifically targets and initiates translation of a subset of mRNAs involved in cell proliferation. The chain is Eukaryotic translation initiation factor 3 subunit K (eif3k) from Xenopus laevis (African clawed frog).